The primary structure comprises 623 residues: MSLSIKELYYTKDKSINNVNLADGNYVVNRGDGWILSRQNQNLGGNISNNGCTAIVGDLRIRETATPYYYPTASFNEEYIRNNVQNVFANFTEASEIPIGFEFSKTAPSNKGLYMYLQYTYIRYEIIKVLRNTVIERAVLYVPSLGYAKSIEFNSGEQIDKNFYFTSEDKCILNEKFIYKKIAETTTAKESNDSNNTTNLNTSQTILPYPNGLYVINKGDGYMRTNDKDLIGTLLIETNTSGSIIQPRLRNTTRPLFNTSNPTLFSQEYTEARLNDAFNIQLFNTSTTLFKFVEEAPDNKNISMKAYNTYEKYELINYQNGNIADKAEYYLPSLGKCEVSDAPSPQAPVVETPVEQDGFIQTGPNENIIVGVINPSENIEEISTPIPDDYTYNIPTSIQNNACYVLFTVNTTGVYKINAQNNLPPLIIYESIGSDNMNIQSNTLSNNNIKAINYITGTDSSNAESYLIVSLIKNKNYYIRIPQISSSTTNQLIFKRELGNISDLANSTVNILDNLNTSGTHYYTRQSPDVGNYISYQLTIPGDFNNIASSIFSFRTRNNQGIGTLYRLTESINGYNLITIKNYSDLLNNVEPISLLNGATYIFRVKVTELNNYNIIFDAYRNS.

As to quaternary structure, botulinum toxins are produced as large progenitor toxins of 12S (M toxin, about 280 kDa) and 16S (L toxin, about 650 kDa). M toxin consists of a non-toxic, non-hemagglutinin component (NTNHA) and the neurotoxin (BoNT/D). L toxin consists of the M toxin and the 3 hemagglutinin (HA) subcomponents of 70, 33, and 17 kDa. The stoichiometry of the whole complex has been modeled as one BoNT/D, one NTNHA, three HA-70, six HA-33 and three HA-17. HA-33 and HA-17 crystallize as a heterotrimer with two HA-33 and one HA-17. Limited treatment of L toxin with pepsin or trypsin produces shorter HA-70 proteins (called HA-55, HA-23 and HA-22) sometimes observed in vivo in other strains of type C and D botulinum toxin preparations.

The protein localises to the secreted. Its function is as follows. The hemagglutinin (HA) component of the progenitor toxin protects the structural integrity of the neurotoxin; may increase internalization of the neurotoxin into the bloodstream of the host. Involved in binding to the small intestine through interactions with glycolipids and glycoproteins containing sialic acid moieties. Erythrocyte agglutination only occurs when the entire complex is assembled. This HA subunit probably connects toxin/NTNHA to HA-33 and HA-17, the other components of the HA complex, and it may also protect the M toxin from proteolysis upon secretion. This is Hemagglutinin component HA-70 type D from Clostridium botulinum D phage (Clostridium botulinum D bacteriophage).